The primary structure comprises 480 residues: Iroquois-class homeodomain protein IRX-1 (480 aa).

The segment at residues 127 to 189 (DPGRPKNATR…NARRRLKKEN (63 aa)) is a DNA-binding region (homeobox; TALE-type). Disordered regions lie at residues 190 to 285 (KVTW…LGLV), 318 to 354 (SLAE…PLQH), and 401 to 480 (PHGP…LPSA). Residues 210-232 (TEGDPEKAEDDEEIDLESIDIDQ) show a composition bias toward acidic residues. Ser-241 carries the post-translational modification Phosphoserine. The span at 254–263 (ARVAPPASAR) shows a compositional bias: low complexity. The span at 264 to 280 (DQSSPLSAAETLKSQDS) shows a compositional bias: polar residues. Low complexity predominate over residues 339–351 (SHASAHGPPSGSP).

The protein belongs to the TALE/IRO homeobox family. As to expression, expressed in specific and overlapping patterns with Irx1 and Irx2 in the developing and adult metanephric kidney. In the adult metanephros, renal expression is found in the loop of Henle in the S3 proximal tubule segment and in the thick ascending limb (TAL) of the distal tubule.

It is found in the nucleus. In Mus musculus (Mouse), this protein is Iroquois-class homeodomain protein IRX-1 (Irx1).